A 174-amino-acid polypeptide reads, in one-letter code: Large ribosomal subunit protein uL10 (174 aa).

This sequence belongs to the universal ribosomal protein uL10 family. In terms of assembly, part of the ribosomal stalk of the 50S ribosomal subunit. The N-terminus interacts with L11 and the large rRNA to form the base of the stalk. The C-terminus forms an elongated spine to which L12 dimers bind in a sequential fashion forming a multimeric L10(L12)X complex.

Forms part of the ribosomal stalk, playing a central role in the interaction of the ribosome with GTP-bound translation factors. This Acidiphilium cryptum (strain JF-5) protein is Large ribosomal subunit protein uL10.